A 70-amino-acid polypeptide reads, in one-letter code: Large ribosomal subunit protein bL28 (70 aa).

The disordered stretch occupies residues 1 to 26 (MAKRCEVCGKAPRSGNTVSHSDKKSG).

Belongs to the bacterial ribosomal protein bL28 family.

This Thermotoga maritima (strain ATCC 43589 / DSM 3109 / JCM 10099 / NBRC 100826 / MSB8) protein is Large ribosomal subunit protein bL28 (rpmB).